The following is a 232-amino-acid chain: Large ribosomal subunit protein uL1 (232 aa).

The protein belongs to the universal ribosomal protein uL1 family. In terms of assembly, part of the 50S ribosomal subunit.

Binds directly to 23S rRNA. The L1 stalk is quite mobile in the ribosome, and is involved in E site tRNA release. Its function is as follows. Protein L1 is also a translational repressor protein, it controls the translation of the L11 operon by binding to its mRNA. In Bordetella bronchiseptica (strain ATCC BAA-588 / NCTC 13252 / RB50) (Alcaligenes bronchisepticus), this protein is Large ribosomal subunit protein uL1.